The primary structure comprises 190 residues: Negative regulator YfiR (190 aa).

GMP is bound at residue Arg-60. 2 cysteine pairs are disulfide-bonded: Cys-71/Cys-110 and Cys-145/Cys-152. Positions 175 and 177 each coordinate GMP.

In terms of assembly, homodimer. Interacts with TpbB/YfiN. Interacts with YfiB. The YfiB-YfiR complex is a 2:2 heterotetramer. Post-translationally, cys-71 and Cys-110 form a disulfide bond in the oxidized form but maintain their free form in the non-oxidized YfiR structure. The Cys-145-Cys-152 disulfide bond is well formed in both structures. The Cys145-Cys152 disulfide bond, but not Cys-71-Cys-110, plays an important role in maintaining the correct folding of the protein.

Its subcellular location is the periplasm. With respect to regulation, tpbB/YfiN repression is released through an YfiB-dependent sequestration of YfiR to the outer membrane. Binds vitamin B6 (VB6) or L-Trp at the periphery of the dimer, and both VB6 and L-Trp are able to reduce biofilm formation induced by YfiB L43P mutant. However, VB6 or L-Trp alone may have little effects in interrupting the YfiB-YfiR interaction. GMP enhances the binding affinity between YfiB and YfiR. In terms of biological role, negatively regulates the activity of the diguanylate cyclase TpbB/YfiN, leading to decreased c-di-GMP production. Inhibits TpbB/YfiN allosterically, through a hydrophobic interaction between the C-terminus of YfiR and a conserved region of the periplasmic PAS domain of TpbB/YfiN. Under reducing conditions, may also act as an YfiB-independent sensing device that is able to activate TpbB/YfiN in response to the redox status of the periplasm. Its function is as follows. Part of the YfiB-TpbB-YfiR (or yfiBNR) system, encoding a tripartite signaling module that modulates intracellular c-di-GMP levels. The system is a key regulator of the small colony variant (SCV) phenotype, and plays an important role in biofilm formation and in vivo persistence. The c-di-GMP produced by TpbB/YfiN stimulates the production of the Pel and Psl exopolysaccharides, which promotes surface attachment, generates an SCV phenotype and confers resistance against phagocytosis. The sequence is that of Negative regulator YfiR from Pseudomonas aeruginosa (strain ATCC 15692 / DSM 22644 / CIP 104116 / JCM 14847 / LMG 12228 / 1C / PRS 101 / PAO1).